We begin with the raw amino-acid sequence, 511 residues long: Alpha-amylase 1 (511 aa).

Positions 1-15 (MKFFLLLSLIGFCWA) are cleaved as a signal peptide. Gln16 is modified (pyrrolidone carboxylic acid). Disulfide bonds link Cys43–Cys101, Cys85–Cys130, and Cys156–Cys175. Residues Asn115, Arg173, and Asp182 each coordinate Ca(2+). Position 210 (Arg210) interacts with chloride. The Nucleophile role is filled by Asp212. Residue His216 coordinates Ca(2+). Glu248 (proton donor) is an active-site residue. Chloride is bound by residues Asn313 and Arg352. 2 disulfide bridges follow: Cys393-Cys399 and Cys465-Cys477.

Belongs to the glycosyl hydrolase 13 family. As to quaternary structure, monomer. Ca(2+) serves as cofactor. It depends on chloride as a cofactor. Expressed in liver and saliva.

It is found in the secreted. It carries out the reaction Endohydrolysis of (1-&gt;4)-alpha-D-glucosidic linkages in polysaccharides containing three or more (1-&gt;4)-alpha-linked D-glucose units.. The protein is Alpha-amylase 1 (Amy1) of Mus musculus (Mouse).